The primary structure comprises 737 residues: Catalase-peroxidase (737 aa).

The interval Met-1–Lys-32 is disordered. Positions Gly-20 to Lys-32 are enriched in polar residues. The tryptophyl-tyrosyl-methioninium (Trp-Tyr) (with M-252) cross-link spans Trp-103–Tyr-226. Catalysis depends on His-104, which acts as the Proton acceptor. Positions Tyr-226 to Met-252 form a cross-link, tryptophyl-tyrosyl-methioninium (Tyr-Met) (with W-103). His-267 lines the heme b pocket.

The protein belongs to the peroxidase family. Peroxidase/catalase subfamily. Homodimer or homotetramer. Requires heme b as cofactor. Post-translationally, formation of the three residue Trp-Tyr-Met cross-link is important for the catalase, but not the peroxidase activity of the enzyme.

The catalysed reaction is H2O2 + AH2 = A + 2 H2O. It catalyses the reaction 2 H2O2 = O2 + 2 H2O. In terms of biological role, bifunctional enzyme with both catalase and broad-spectrum peroxidase activity. This Marinomonas sp. (strain MWYL1) protein is Catalase-peroxidase.